Here is a 147-residue protein sequence, read N- to C-terminus: Deoxyuridine 5'-triphosphate nucleotidohydrolase (147 aa).

Residue Arg24 coordinates Mg(2+). DUTP contacts are provided by residues 68–70 (PRS), 82–85 (GVID), Tyr88, Gly93, Ile95, and Arg111.

The protein belongs to the dUTPase family. Mg(2+) is required as a cofactor.

The enzyme catalyses dUTP + H2O = dUMP + diphosphate + H(+). This enzyme is involved in nucleotide metabolism: it produces dUMP, the immediate precursor of thymidine nucleotides and it decreases the intracellular concentration of dUTP so that uracil cannot be incorporated into DNA. The sequence is that of Deoxyuridine 5'-triphosphate nucleotidohydrolase (OPG046) from Camelus.